We begin with the raw amino-acid sequence, 399 residues long: MAFADYPVQSLMYITNRPEIVFTEGKGSWLTDHNGKRYLDFVQGWAVNCLGHSNDGMIEALNAQAKKLINPSPAFYNEPMAKLAGLLSAHSCFDKVFFANSGAEANEGAIKLARKWGKKHKSGAGKNRFEIITFDHSFHGRTLATMSASGKAGWDTIFAPQVPGFPKAILNDIASVEALITDETVGVMLEPVQGEGGVLPATQEFMQQLRALTRKHKLLLIVDEVQAGCGRCGTLFAYQLSNIEPDIMTLGKGIGGGVPLSALLCTDEVASFEAGDQGGTYNGNPLMTAVGCSVIEQLLAPGFLAGVQERGAYLRAQLLELSEAFGLAGERGEGLLRALLLGKDIGGQLVEAAREMNPTGLLLNAPRPNILRFMPALNVTTDEIDTMIGMLRTLLKAHG.

Residues 102–103 and Phe138 contribute to the pyridoxal 5'-phosphate site; that span reads GA. Position 141 (Arg141) interacts with N(2)-acetyl-L-ornithine. 223–226 contacts pyridoxal 5'-phosphate; that stretch reads DEVQ. The residue at position 252 (Lys252) is an N6-(pyridoxal phosphate)lysine. Thr280 provides a ligand contact to pyridoxal 5'-phosphate.

The protein belongs to the class-III pyridoxal-phosphate-dependent aminotransferase family. ArgD subfamily. In terms of assembly, homodimer. It depends on pyridoxal 5'-phosphate as a cofactor.

The protein localises to the cytoplasm. It catalyses the reaction N(2)-acetyl-L-ornithine + 2-oxoglutarate = N-acetyl-L-glutamate 5-semialdehyde + L-glutamate. The protein operates within amino-acid biosynthesis; L-arginine biosynthesis; N(2)-acetyl-L-ornithine from L-glutamate: step 4/4. The chain is Acetylornithine aminotransferase from Ralstonia nicotianae (strain ATCC BAA-1114 / GMI1000) (Ralstonia solanacearum).